The chain runs to 122 residues: Large ribosomal subunit protein uL18 (122 aa).

A disordered region spans residues 1–20; sequence MFKKVSKNANRLSRHQRVRN.

This sequence belongs to the universal ribosomal protein uL18 family. Part of the 50S ribosomal subunit; part of the 5S rRNA/L5/L18/L25 subcomplex. Contacts the 5S and 23S rRNAs.

In terms of biological role, this is one of the proteins that bind and probably mediate the attachment of the 5S RNA into the large ribosomal subunit, where it forms part of the central protuberance. This Alkaliphilus oremlandii (strain OhILAs) (Clostridium oremlandii (strain OhILAs)) protein is Large ribosomal subunit protein uL18.